A 325-amino-acid polypeptide reads, in one-letter code: Glutarate 2-hydroxylase (325 aa).

3 residues coordinate Fe cation: His-160, Asp-162, and His-292.

This sequence belongs to the glutarate hydroxylase family. Homotetramer. The cofactor is Fe(2+).

The enzyme catalyses glutarate + 2-oxoglutarate + O2 = (S)-2-hydroxyglutarate + succinate + CO2. It functions in the pathway amino-acid degradation. Its function is as follows. Acts as an alpha-ketoglutarate-dependent dioxygenase catalyzing hydroxylation of glutarate (GA) to L-2-hydroxyglutarate (L2HG). Functions in a L-lysine degradation pathway that proceeds via cadaverine, glutarate and L-2-hydroxyglutarate. In Pseudomonas putida (strain GB-1), this protein is Glutarate 2-hydroxylase.